We begin with the raw amino-acid sequence, 224 residues long: UPF0758 protein PM1152 (224 aa).

Residues 102 to 224 (AFKNSENVRF…YYSFAENRLL (123 aa)) enclose the MPN domain. Zn(2+) contacts are provided by His173, His175, and Asp186. A JAMM motif motif is present at residues 173-186 (HNHPSGNPEPSASD).

This sequence belongs to the UPF0758 family.

The polypeptide is UPF0758 protein PM1152 (Pasteurella multocida (strain Pm70)).